Here is a 642-residue protein sequence, read N- to C-terminus: 1-deoxy-D-xylulose-5-phosphate synthase (642 aa).

Thiamine diphosphate contacts are provided by residues His-79 and 120–122; that span reads AHS. Asp-151 contributes to the Mg(2+) binding site. Residues 152 to 153, Asn-180, Tyr-290, and Glu-372 contribute to the thiamine diphosphate site; that span reads GS. Asn-180 contacts Mg(2+).

It belongs to the transketolase family. DXPS subfamily. Homodimer. It depends on Mg(2+) as a cofactor. Thiamine diphosphate is required as a cofactor.

It carries out the reaction D-glyceraldehyde 3-phosphate + pyruvate + H(+) = 1-deoxy-D-xylulose 5-phosphate + CO2. Its pathway is metabolic intermediate biosynthesis; 1-deoxy-D-xylulose 5-phosphate biosynthesis; 1-deoxy-D-xylulose 5-phosphate from D-glyceraldehyde 3-phosphate and pyruvate: step 1/1. In terms of biological role, catalyzes the acyloin condensation reaction between C atoms 2 and 3 of pyruvate and glyceraldehyde 3-phosphate to yield 1-deoxy-D-xylulose-5-phosphate (DXP). This chain is 1-deoxy-D-xylulose-5-phosphate synthase, found in Beijerinckia indica subsp. indica (strain ATCC 9039 / DSM 1715 / NCIMB 8712).